The primary structure comprises 748 residues: Acetyl-CoA decarbonylase/synthase complex subunit beta 1 (748 aa).

Residues Cys480, Cys483, Cys569, and Cys571 each contribute to the [Ni-Fe-S] cluster site.

This sequence belongs to the CdhC family. Monomer. The ACDS complex is made up of alpha, epsilon, beta, gamma and delta chains with a probable stoichiometry of (alpha(2)epsilon(2))(4)-beta(8)-(gamma(1)delta(1))(8) (Potential). It depends on [Ni-Fe-S] cluster as a cofactor.

It carries out the reaction Co(I)-[corrinoid Fe-S protein] + acetyl-CoA + H(+) = methyl-Co(III)-[corrinoid Fe-S protein] + CO + CoA. Functionally, part of a complex that catalyzes the reversible cleavage of acetyl-CoA, allowing autotrophic growth from CO(2). The alpha-epsilon complex generates CO from CO(2), while the beta subunit (this protein) combines the CO with CoA and a methyl group to form acetyl-CoA. The methyl group, which is incorporated into acetyl-CoA, is transferred to the beta subunit by a corrinoid iron-sulfur protein (the gamma-delta complex). This chain is Acetyl-CoA decarbonylase/synthase complex subunit beta 1 (cdhC1), found in Methanocaldococcus jannaschii (strain ATCC 43067 / DSM 2661 / JAL-1 / JCM 10045 / NBRC 100440) (Methanococcus jannaschii).